The primary structure comprises 454 residues: F-box protein At1g67130 (454 aa).

Positions 4–53 (GETLDSIPTDLILDILSRLPTKSIARFHCVSKLWSSMLASQDFTRLFVNR) constitute an F-box domain.

The polypeptide is F-box protein At1g67130 (Arabidopsis thaliana (Mouse-ear cress)).